We begin with the raw amino-acid sequence, 268 residues long: Large ribosomal subunit protein mL46 (268 aa).

The N-terminal 25 residues, 1–25 (MYLKRNIINMQRSFSRQFHISVRNS), are a transit peptide targeting the mitochondrion.

Belongs to the mitochondrion-specific ribosomal protein mL46 family. Component of the mitochondrial large ribosomal subunit (mt-LSU). Mature yeast 74S mitochondrial ribosomes consist of a small (37S) and a large (54S) subunit. The 37S small subunit contains a 15S ribosomal RNA (15S mt-rRNA) and at least 32 different proteins. The 54S large subunit contains a 21S rRNA (21S mt-rRNA) and at least 45 different proteins.

It is found in the mitochondrion. Component of the mitochondrial ribosome (mitoribosome), a dedicated translation machinery responsible for the synthesis of mitochondrial genome-encoded proteins, including at least some of the essential transmembrane subunits of the mitochondrial respiratory chain. The mitoribosomes are attached to the mitochondrial inner membrane and translation products are cotranslationally integrated into the membrane. The polypeptide is Large ribosomal subunit protein mL46 (mrpl17) (Schizosaccharomyces pombe (strain 972 / ATCC 24843) (Fission yeast)).